Here is a 347-residue protein sequence, read N- to C-terminus: CDK2-associated and cullin domain-containing protein 1 (347 aa).

Positions 1 to 11 are enriched in acidic residues; sequence MEESMEEEEML. Disordered stretches follow at residues 1-63 and 320-347; these read MEES…LPGG and RGDQ…RGYR. The segment covering 34 to 49 has biased composition (pro residues); that stretch reads QPPPAPPLPPPPPPRP.

Belongs to the cullin family. As to quaternary structure, interacts with CDK2.

Cell cycle associated protein capable of promoting cell proliferation through the activation of CDK2 at the G1/S phase transition. This chain is CDK2-associated and cullin domain-containing protein 1 (Cacul1), found in Rattus norvegicus (Rat).